The following is a 58-amino-acid chain: Protein SHMOOSE (58 aa).

The disordered stretch occupies residues 27-58 (FGATPNKSNNHAHYYNHPNPDFPNSPHPYHPR). Positions 35–45 (NNHAHYYNHPN) are enriched in low complexity. Over residues 46–58 (PDFPNSPHPYHPR) the composition is skewed to pro residues.

As to quaternary structure, interacts with IMMT/mitofilin. Detected in cerebrospinal fluid (at protein level).

Its subcellular location is the mitochondrion. The protein localises to the nucleus. Increases neural cell metabolic activity and mitochondrial oxygen consumption rate. The sequence is that of Protein SHMOOSE from Homo sapiens (Human).